The sequence spans 246 residues: Cell division protein ZapD (246 aa).

It belongs to the ZapD family. In terms of assembly, interacts with FtsZ.

Its subcellular location is the cytoplasm. In terms of biological role, cell division factor that enhances FtsZ-ring assembly. Directly interacts with FtsZ and promotes bundling of FtsZ protofilaments, with a reduction in FtsZ GTPase activity. This chain is Cell division protein ZapD, found in Vibrio parahaemolyticus serotype O3:K6 (strain RIMD 2210633).